We begin with the raw amino-acid sequence, 1237 residues long: Putative structural protein VP3 (1237 aa).

Residues Gly963 to Gln1178 enclose the PPPDE domain. Residues His1001 and Cys1149 contribute to the active site.

The protein localises to the virion. The protein is Putative structural protein VP3 (S3) of Lymantria dispar cypovirus 1 (isolate Rao) (LdCPV-1).